We begin with the raw amino-acid sequence, 105 residues long: Prokineticin-1 (105 aa).

The signal sequence occupies residues 1 to 19 (MRGAVQVFIMLLLATVSDC). 5 cysteine pairs are disulfide-bonded: Cys-26–Cys-38, Cys-32–Cys-50, Cys-37–Cys-78, Cys-60–Cys-86, and Cys-80–Cys-96.

This sequence belongs to the AVIT (prokineticin) family.

The protein localises to the secreted. Functionally, potently contracts gastrointestinal (GI) smooth muscle. Induces proliferation, migration and fenestration (the formation of membrane discontinuities) in capillary endothelial cells derived from endocrine glands. Has little or no effect on a variety of other endothelial and non-endothelial cell types. Induces proliferation and differentiation, but not migration, of enteric neural crest cells. Directly influences neuroblastoma progression by promoting the proliferation and migration of neuroblastoma cells. Positively regulates PTGS2 expression and prostaglandin synthesis. May play a role in placentation. May play a role in normal and pathological testis angiogenesis. In Rattus norvegicus (Rat), this protein is Prokineticin-1 (Prok1).